Consider the following 176-residue polypeptide: MHKKYSCLQIGIHWLVLLLVIIAWSSIELRGFAPRSYQPWMKMIHFSCGIAILVLMMTRILIQLRYPTPPIVPKPSPMIVGLAHVGHWVIYLLFIALPIIGIAILYCRGSSWIAFGLIMPHAEQANFDLADTLKAYHLLLANMSYFVIGLHALAALLHHYVLKDNTLLRMMPKKRG.

4 consecutive transmembrane segments (helical) span residues 7–27 (CLQIGIHWLVLLLVIIAWSSI), 44–64 (IHFSCGIAILVLMMTRILIQL), 85–105 (VGHWVIYLLFIALPIIGIAIL), and 137–157 (HLLLANMSYFVIGLHALAALL). Heme b is bound by residues histidine 13 and histidine 45. Residues histidine 137 and histidine 151 each contribute to the heme b site.

This sequence belongs to the cytochrome b561 family. Heme b is required as a cofactor.

The protein localises to the cell inner membrane. It catalyses the reaction a ubiquinol + 2 O2 = 2 superoxide + a ubiquinone + 2 H(+). Its function is as follows. B-type di-heme cytochrome. Catalyzes the oxidation of superoxide to molecular oxygen and transfers the extracted electrons to ubiquinone through the two hemes. The polypeptide is Probable superoxide oxidase CybB (cybB) (Yersinia pestis).